The sequence spans 87 residues: Antitoxin epsilon (87 aa).

It belongs to the epsilon antitoxin family. In the presence of the zeta toxin, forms an inactive PezA(2)PezT(2) heterotetramer.

Antitoxin component of a type II toxin-antitoxin (TA) system. Neutralizes the toxic effect of cognate zeta toxin. Part of a postsegregational killing (PSK) system involved in the killing of plasmid-free cells. Continuous synthesis of the epsilon antitoxin is required to counteract the zeta toxin. This Lactococcus lactis subsp. lactis (Streptococcus lactis) protein is Antitoxin epsilon.